A 232-amino-acid chain; its full sequence is 2,3-bisphosphoglycerate-dependent phosphoglycerate mutase (232 aa).

Residues Arg10–Asn17, Thr23–Gly24, Arg62, Glu89–Tyr92, Lys100, Arg116–Arg117, and Gly185–Asn186 each bind substrate. His11 (tele-phosphohistidine intermediate) is an active-site residue. The active-site Proton donor/acceptor is the Glu89.

Belongs to the phosphoglycerate mutase family. BPG-dependent PGAM subfamily. Homodimer.

The enzyme catalyses (2R)-2-phosphoglycerate = (2R)-3-phosphoglycerate. The protein operates within carbohydrate degradation; glycolysis; pyruvate from D-glyceraldehyde 3-phosphate: step 3/5. Its function is as follows. Catalyzes the interconversion of 2-phosphoglycerate and 3-phosphoglycerate. In Buchnera aphidicola subsp. Baizongia pistaciae (strain Bp), this protein is 2,3-bisphosphoglycerate-dependent phosphoglycerate mutase.